The primary structure comprises 756 residues: MTPAHGTQPGMLPGHEFEALLGARHHDPFAVLGPHPDGDGTLVRACLPGAASVQLTDAGGTPLAEMARLHGGGVFAARLPREYKGGAPDYRLRVQWSDGSGQCGADPYAFGLLLGELDLHLIAEGRHFELGACLGAQWQRVDGIDGVRFAVWAPNARRVSVIADFNGWHPARHPMRLRHPSGIWELFIPAALGAQPGSRYKYDLLDPHGTELPDKADPLALATEAPPATASVVAGPGQGAPPFAWHDADWMARRGGADPYAAPMSVYEVHALSWLRAANDTQRGWEILAERLVPYVQELGFTHIELLPITEHPFGGSWGYQPLSLYAPTARLGPPQAFAAFIDRCHQAGIGVLLDWVPAHFPTDPHGLARFDGTALYEHEDPREGFHQDWNTLIYNLGRNEVRGFLLAGALHWLEHFHADGLRVDAVASMLYRDYSREPGQWVPNRFGGRENLEAIDFLRELNAVVHERCPGALTIAEESTAWPGVTASVASGGLGFDFKWNMGWMHDTLHYLGHEPVHRAWHHQDMTFGLVYAWSEAFVLPLSHDEVVHGKASMIGKVPGDEWQRFAGLRAYYGFMWAHPGKKLLFMGGELAQWQEWNHDAELDWALLDHPMHRGMHTLVRDLNRLYRELPALHALDHRPEGFQWVVGDDNHNSVFAWLRRAGPYSREVVLVVVNMTPVPRYGYRLGVPYAGAWQECLNTDAAVYGGTNVGNSGAVAAVDVPSHGQPASLALTLPPLATLVLRFDPGGGIQGAST.

Residue D425 is the Nucleophile of the active site. E478 acts as the Proton donor in catalysis.

The protein belongs to the glycosyl hydrolase 13 family. GlgB subfamily. In terms of assembly, monomer.

The catalysed reaction is Transfers a segment of a (1-&gt;4)-alpha-D-glucan chain to a primary hydroxy group in a similar glucan chain.. Its pathway is glycan biosynthesis; glycogen biosynthesis. Functionally, catalyzes the formation of the alpha-1,6-glucosidic linkages in glycogen by scission of a 1,4-alpha-linked oligosaccharide from growing alpha-1,4-glucan chains and the subsequent attachment of the oligosaccharide to the alpha-1,6 position. This Cupriavidus necator (strain ATCC 17699 / DSM 428 / KCTC 22496 / NCIMB 10442 / H16 / Stanier 337) (Ralstonia eutropha) protein is 1,4-alpha-glucan branching enzyme GlgB.